A 455-amino-acid polypeptide reads, in one-letter code: MGLSVIILAAGQGKRMASSTPKILHPLGGIPLLERVVNTARLLNPHTIQVVYGNGGSHVREKLNYLPVHWIEQSQPLGTGHAVLQAIPFCQNEDRVLILYGDVPLISPKTLNSLLENTPSNGLGVVVAELPDPTGLGRIIRDDFGNILSIVEHKDAAEHQLKIREINTGIMTTTAMNLKKWLPQLNNNNCQKEYYLTDTVALAVAEGCPVGCVAAQCCEEVQGVNDRWELTKLERYYQRLMAKKLSLAGVTIIDPERFDARGENIEIAPDVVIDVNVILEGNVQLDRNVRIGPNVILKNTTVGENTEIHANSVIEAAVIKANCSVGPFARLRPGSVLEEGAKVGNFVEMKKTTLGRGSKANHLTYLGDTIIGKNVNVGAGTITCNYDGANKWQTKIEDGAFIGSNVALVAPLTVGKNATIGAGSTLSQDAPPDQLTVARERQRTIKGWHRPTKKE.

Positions 1–227 are pyrophosphorylase; sequence MGLSVIILAA…CEEVQGVNDR (227 aa). Residues 8-11, Lys22, Gln73, 78-79, 100-102, Gly137, Glu152, Asn167, and Asn225 each bind UDP-N-acetyl-alpha-D-glucosamine; these read LAAG, GT, and YGD. Position 102 (Asp102) interacts with Mg(2+). Residue Asn225 coordinates Mg(2+). Positions 228–248 are linker; sequence WELTKLERYYQRLMAKKLSLA. Positions 249–455 are N-acetyltransferase; sequence GVTIIDPERF…KGWHRPTKKE (207 aa). The UDP-N-acetyl-alpha-D-glucosamine site is built by Arg332 and Lys350. The active-site Proton acceptor is the His362. The UDP-N-acetyl-alpha-D-glucosamine site is built by Tyr365 and Asn376. Residues Ala379, 385 to 386, Ser404, Ala422, and Arg439 each bind acetyl-CoA; that span reads NY.

The protein in the N-terminal section; belongs to the N-acetylglucosamine-1-phosphate uridyltransferase family. It in the C-terminal section; belongs to the transferase hexapeptide repeat family. As to quaternary structure, homotrimer. The cofactor is Mg(2+).

It localises to the cytoplasm. It carries out the reaction alpha-D-glucosamine 1-phosphate + acetyl-CoA = N-acetyl-alpha-D-glucosamine 1-phosphate + CoA + H(+). The enzyme catalyses N-acetyl-alpha-D-glucosamine 1-phosphate + UTP + H(+) = UDP-N-acetyl-alpha-D-glucosamine + diphosphate. It participates in nucleotide-sugar biosynthesis; UDP-N-acetyl-alpha-D-glucosamine biosynthesis; N-acetyl-alpha-D-glucosamine 1-phosphate from alpha-D-glucosamine 6-phosphate (route II): step 2/2. It functions in the pathway nucleotide-sugar biosynthesis; UDP-N-acetyl-alpha-D-glucosamine biosynthesis; UDP-N-acetyl-alpha-D-glucosamine from N-acetyl-alpha-D-glucosamine 1-phosphate: step 1/1. The protein operates within bacterial outer membrane biogenesis; LPS lipid A biosynthesis. In terms of biological role, catalyzes the last two sequential reactions in the de novo biosynthetic pathway for UDP-N-acetylglucosamine (UDP-GlcNAc). The C-terminal domain catalyzes the transfer of acetyl group from acetyl coenzyme A to glucosamine-1-phosphate (GlcN-1-P) to produce N-acetylglucosamine-1-phosphate (GlcNAc-1-P), which is converted into UDP-GlcNAc by the transfer of uridine 5-monophosphate (from uridine 5-triphosphate), a reaction catalyzed by the N-terminal domain. This chain is Bifunctional protein GlmU, found in Coxiella burnetii (strain CbuG_Q212) (Coxiella burnetii (strain Q212)).